The primary structure comprises 135 residues: MLSPKRNRFRKQHRGRMKGISYRGNRICFGRYALQALEPAWITSRQIEAGRRAMTRNVRRGGKIWVRIFPDKPVTVRPTETRMGSGKGSPEYWVAVVKPGRILYEMSGVAENIARKAISIAASKMPIKTQFIISG.

It belongs to the universal ribosomal protein uL16 family. In terms of assembly, part of the 50S ribosomal subunit.

It localises to the plastid. It is found in the chloroplast. The chain is Large ribosomal subunit protein uL16c from Gossypium hirsutum (Upland cotton).